The following is a 343-amino-acid chain: MPINCKAKCGKAAALKRPKTGDALCKECFFAAFEAEIHHTITSSKLFRRGEKVAVAASGGKDSTVLAHVMKLLNERHDYGLELVLLSIDEGITGYRDDSLETVKQNRDDYKMPLKILSYEELYGWTMDRIVSQIGRSNNCTFCGVFRRQALDRGAKLLCVDSIATGHNADDIAETVLMNVLRGDTARLRRCTDIRTGGGEDSIPRVKPLKYSYEKEIVMYAHYKKLVYFSTECVFAPNAYRGHARAFLKDLEKVRPSVIMDIIYSGEQLRFKDTAKNPVRGTCNRCGFISSQQPCKACVLLEGLNRGLPKLGIGKKSKGDRMIAKQDQELALRERANLVKNDF.

The protein belongs to the TtcA family. CTU1/NCS6/ATPBD3 subfamily.

It localises to the cytoplasm. The protein operates within tRNA modification; 5-methoxycarbonylmethyl-2-thiouridine-tRNA biosynthesis. Plays a central role in 2-thiolation of mcm(5)S(2)U at tRNA wobble positions of tRNA(Lys), tRNA(Glu) and tRNA(Gln). Directly binds tRNAs and probably acts by catalyzing adenylation of tRNAs, an intermediate required for 2-thiolation. It is unclear whether it acts as a sulfurtransferase that transfers sulfur from thiocarboxylated URM1 onto the uridine of tRNAs at wobble position. The chain is Cytoplasmic tRNA 2-thiolation protein 1 from Drosophila pseudoobscura pseudoobscura (Fruit fly).